A 300-amino-acid chain; its full sequence is MRKMEAKKEEIKKGPWKAEEDEVLINHVKRYGPRDWSSIRSKGLLQRTGKSCRLRWVNKLRPNLKNGCKFSADEERTVIELQSEFGNKWARIATYLPGRTDNDVKNFWSSRQKRLARILHNSSDASSSSFNPKSSSSHRLKGKNVKPIRQSSQGFGLVEEEVTVSSSCSQMVPYSSDQVGDEVLRLPDLGVKLEHQPFAFGTDLVLAEYSDSQNDANQQAISPFSPESRELLARLDDPFYYDILGPADSSEPLFALPQPFFEPSPVPRRCRHVSKDEEADVFLDDFPADMFDQVDPIPSP.

2 HTH myb-type domains span residues 8-64 and 65-116; these read KEEI…RPNL and KNGC…KRLA. 2 consecutive DNA-binding regions (H-T-H motif) follow at residues 36–60 and 89–112; these read WSSIRSKGLLQRTGKSCRLRWVNKL and WARIATYLPGRTDNDVKNFWSSRQ. Residues 123–135 are compositionally biased toward low complexity; that stretch reads SDASSSSFNPKSS. The interval 123–145 is disordered; the sequence is SDASSSSFNPKSSSSHRLKGKNV. Residues 136–145 are compositionally biased toward basic residues; that stretch reads SSHRLKGKNV.

In terms of tissue distribution, confined to inflorescences, especially in stamens and pollen.

It is found in the nucleus. Its function is as follows. Transcription activator that acts as a positive regulator of male germline development by promoting both gametic cell specification and cell cycle progression. Binds to canonical MYB sites 5'-AACCGTC-3', 5'-AAACCGC-3' and 5'-AACCGT-3' in promoters to trigger the expression of male germline-specific or enriched genes (e.g. MGH3, GEX2 and GCS1), including those required for fertilization. Required for sperm cell specification leading to pollen maturation by activating a germline-specific regulon. Involved in pollen mitosis entry at G2-M transition via the regulation of CYCB1-1, DAZ1 and DAZ2 expression. The polypeptide is Transcription factor DUO1 (Arabidopsis thaliana (Mouse-ear cress)).